The chain runs to 458 residues: N-acetylgalactosamine kinase (458 aa).

Alpha-D-galactose is bound by residues Arg-43, Glu-49, His-50, and Asp-52. Residues Gly-143, Ser-145, and Ser-146 each contribute to the ATP site. Asp-190 provides a ligand contact to alpha-D-galactose. The active-site Proton acceptor is Asp-190. Asn-233 and Lys-234 together coordinate ATP.

The protein belongs to the GHMP kinase family. GalK subfamily. As to quaternary structure, monomer.

It carries out the reaction N-acetyl-alpha-D-galactosamine + ATP = N-acetyl-alpha-D-galactosamine 1-phosphate + ADP + H(+). Functionally, acts on GalNAc. Also acts as a galactokinase when galactose is present at high concentrations. May be involved in a salvage pathway for the reutilization of free GalNAc derived from the degradation of complex carbohydrates. This Homo sapiens (Human) protein is N-acetylgalactosamine kinase (GALK2).